A 295-amino-acid chain; its full sequence is Aquaporin NIP2-1 (295 aa).

The next 2 membrane-spanning stretches (helical) occupy residues 49–69 (VVSE…AAGI) and 83–103 (SVAG…ISGA). Positions 106–108 (NPA) match the NPA 1 motif. The next 3 membrane-spanning stretches (helical) occupy residues 124-146 (VPFY…KAVL), 164-184 (SLVI…AVAT), and 192-212 (LAGL…GAVS). The NPA 2 signature appears at 217–219 (NPA). The helical transmembrane segment at 230-250 (LYTGLWIYFLGPVLGTLSGAW) threads the bilayer.

Belongs to the MIP/aquaporin (TC 1.A.8) family. NIP (TC 1.A.8.12) subfamily.

Its subcellular location is the membrane. In terms of biological role, aquaporins facilitate the transport of water and small neutral solutes across cell membranes. This Zea mays (Maize) protein is Aquaporin NIP2-1 (NIP2-1).